The following is a 351-amino-acid chain: Probable cell division control protein 7 homolog 2 (351 aa).

The Protein kinase domain maps to 21 to 341 (YTPIEKIGEG…ASDALSHPFF (321 aa)). ATP contacts are provided by residues 27 to 35 (IGEGSFSVV) and Lys50. Asp137 acts as the Proton acceptor in catalysis.

This sequence belongs to the protein kinase superfamily. Ser/Thr protein kinase family. CDC7 subfamily. Mg(2+) is required as a cofactor.

It catalyses the reaction L-seryl-[protein] + ATP = O-phospho-L-seryl-[protein] + ADP + H(+). The enzyme catalyses L-threonyl-[protein] + ATP = O-phospho-L-threonyl-[protein] + ADP + H(+). Its function is as follows. Serine/threonine-protein kinase. Needed for the initiation of DNA synthesis during mitosis as well as for synaptonemal complex formation and commitment to recombination during meiosis. This chain is Probable cell division control protein 7 homolog 2 (CDC7-2), found in Encephalitozoon cuniculi (strain GB-M1) (Microsporidian parasite).